Reading from the N-terminus, the 438-residue chain is Glucose-6-phosphate isomerase (438 aa).

The active-site Proton donor is Glu289. Active-site residues include His310 and Lys424.

This sequence belongs to the GPI family.

It is found in the cytoplasm. It carries out the reaction alpha-D-glucose 6-phosphate = beta-D-fructose 6-phosphate. The protein operates within carbohydrate biosynthesis; gluconeogenesis. Its pathway is carbohydrate degradation; glycolysis; D-glyceraldehyde 3-phosphate and glycerone phosphate from D-glucose: step 2/4. Functionally, catalyzes the reversible isomerization of glucose-6-phosphate to fructose-6-phosphate. The chain is Glucose-6-phosphate isomerase from Oenococcus oeni (strain ATCC BAA-331 / PSU-1).